A 435-amino-acid chain; its full sequence is Large ribosomal subunit protein mL65 (435 aa).

This sequence belongs to the mitochondrion-specific ribosomal protein mL65 family. In terms of assembly, component of the mitochondrial ribosome small subunit (28S) which comprises a 12S rRNA and about 30 distinct proteins.

Its subcellular location is the mitochondrion. The protein is Large ribosomal subunit protein mL65 (MRPS30) of Bos taurus (Bovine).